Reading from the N-terminus, the 193-residue chain is Potassium-transporting ATPase KdpC subunit (193 aa).

Residues 7-27 (PLVVIFAVLTVVTGMAYPAVM) traverse the membrane as a helical segment.

It belongs to the KdpC family. As to quaternary structure, the system is composed of three essential subunits: KdpA, KdpB and KdpC.

It localises to the cell inner membrane. Part of the high-affinity ATP-driven potassium transport (or Kdp) system, which catalyzes the hydrolysis of ATP coupled with the electrogenic transport of potassium into the cytoplasm. This subunit acts as a catalytic chaperone that increases the ATP-binding affinity of the ATP-hydrolyzing subunit KdpB by the formation of a transient KdpB/KdpC/ATP ternary complex. The polypeptide is Potassium-transporting ATPase KdpC subunit (Burkholderia vietnamiensis (strain G4 / LMG 22486) (Burkholderia cepacia (strain R1808))).